Reading from the N-terminus, the 272-residue chain is Phosphoribosylformylglycinamidine synthase subunit PurQ (272 aa).

One can recognise a Glutamine amidotransferase type-1 domain in the interval 8–272; the sequence is VLVMSGYGIN…FKNAVEYFNK (265 aa). The active-site Nucleophile is C98. Catalysis depends on residues H225, E227, and E235.

Part of the FGAM synthase complex composed of 1 PurL, 1 PurQ and 2 PurS subunits.

It localises to the cytoplasm. It catalyses the reaction N(2)-formyl-N(1)-(5-phospho-beta-D-ribosyl)glycinamide + L-glutamine + ATP + H2O = 2-formamido-N(1)-(5-O-phospho-beta-D-ribosyl)acetamidine + L-glutamate + ADP + phosphate + H(+). The enzyme catalyses L-glutamine + H2O = L-glutamate + NH4(+). It participates in purine metabolism; IMP biosynthesis via de novo pathway; 5-amino-1-(5-phospho-D-ribosyl)imidazole from N(2)-formyl-N(1)-(5-phospho-D-ribosyl)glycinamide: step 1/2. Its function is as follows. Part of the phosphoribosylformylglycinamidine synthase complex involved in the purines biosynthetic pathway. Catalyzes the ATP-dependent conversion of formylglycinamide ribonucleotide (FGAR) and glutamine to yield formylglycinamidine ribonucleotide (FGAM) and glutamate. The FGAM synthase complex is composed of three subunits. PurQ produces an ammonia molecule by converting glutamine to glutamate. PurL transfers the ammonia molecule to FGAR to form FGAM in an ATP-dependent manner. PurS interacts with PurQ and PurL and is thought to assist in the transfer of the ammonia molecule from PurQ to PurL. The chain is Phosphoribosylformylglycinamidine synthase subunit PurQ from Methanococcus maripaludis (strain DSM 14266 / JCM 13030 / NBRC 101832 / S2 / LL).